The sequence spans 264 residues: H-2 class II histocompatibility antigen, I-E beta chain (264 aa).

Positions 1-31 (MVWLPRVPCVAAVILLLTVLSPPVALVRNSR) are cleaved as a signal peptide. The beta-1 stretch occupies residues 32–121 (PRFLEYSTSE…IFDNFLVPRR (90 aa)). The Extracellular segment spans residues 32 to 225 (PRFLEYSTSE…KAQSTSAQNK (194 aa)). Intrachain disulfides connect cysteine 42–cysteine 106 and cysteine 144–cysteine 200. A glycan (N-linked (GlcNAc...) asparagine) is linked at asparagine 46. Positions 122-215 (VEPTVTVYPT…SLTDPVTVEW (94 aa)) are beta-2. Residues 124–214 (PTVTVYPTKT…PSLTDPVTVE (91 aa)) enclose the Ig-like C1-type domain. A connecting peptide region spans residues 216 to 225 (KAQSTSAQNK). The helical transmembrane segment at 226–248 (MLSGVGGFVLGLLFLGAGLFIYF) threads the bilayer. Topologically, residues 249–264 (RNQKGQSGLQPTGLLS) are cytoplasmic.

It belongs to the MHC class II family. Ubiquitinated in immature dendritic cells leading to down-regulation of MHC class II.

The protein resides in the membrane. In Mus musculus (Mouse), this protein is H-2 class II histocompatibility antigen, I-E beta chain (H2-Eb1).